Consider the following 309-residue polypeptide: tRNA hydroxylation protein P2 (309 aa).

Belongs to the peptidase U32 family.

Involved in prephenate-dependent formation of 5-hydroxyuridine (ho5U) modification at position 34 in tRNAs, the first step in 5-methoxyuridine (mo5U) biosynthesis. This Bacillus subtilis (strain 168) protein is tRNA hydroxylation protein P2.